The sequence spans 32 residues: MMVHLTLKSHLIKEELLWHALSPSYSCRYHGR.

This is an uncharacterized protein from Saccharomyces cerevisiae (strain ATCC 204508 / S288c) (Baker's yeast).